The chain runs to 274 residues: Rhamnulose-1-phosphate aldolase (274 aa).

The active site involves Glu117. Residues His141, His143, and His212 each contribute to the Zn(2+) site.

Belongs to the aldolase class II family. RhaD subfamily. In terms of assembly, homotetramer. The cofactor is Zn(2+).

It localises to the cytoplasm. The catalysed reaction is L-rhamnulose 1-phosphate = (S)-lactaldehyde + dihydroxyacetone phosphate. The protein operates within carbohydrate degradation; L-rhamnose degradation; glycerone phosphate from L-rhamnose: step 3/3. Functionally, catalyzes the reversible cleavage of L-rhamnulose-1-phosphate to dihydroxyacetone phosphate (DHAP) and L-lactaldehyde. The protein is Rhamnulose-1-phosphate aldolase of Escherichia coli O127:H6 (strain E2348/69 / EPEC).